The chain runs to 138 residues: Large ribosomal subunit protein mL54 (138 aa).

A mitochondrion-targeting transit peptide spans 1–14; sequence MATKRLFGATRTWA.

The protein belongs to the mitochondrion-specific ribosomal protein mL54 family. In terms of assembly, component of the mitochondrial large ribosomal subunit (mt-LSU). Mature mammalian 55S mitochondrial ribosomes consist of a small (28S) and a large (39S) subunit. The 28S small subunit contains a 12S ribosomal RNA (12S mt-rRNA) and 30 different proteins. The 39S large subunit contains a 16S rRNA (16S mt-rRNA), a copy of mitochondrial valine transfer RNA (mt-tRNA(Val)), which plays an integral structural role, and 52 different proteins.

Its subcellular location is the mitochondrion. The chain is Large ribosomal subunit protein mL54 (MRPL54) from Homo sapiens (Human).